We begin with the raw amino-acid sequence, 182 residues long: Epoxyqueuosine reductase QueH (182 aa).

Cysteine 10, cysteine 11, cysteine 85, and cysteine 88 together coordinate [4Fe-4S] cluster. Cysteine 165 and cysteine 167 are disulfide-bonded.

This sequence belongs to the QueH family.

It carries out the reaction epoxyqueuosine(34) in tRNA + AH2 = queuosine(34) in tRNA + A + H2O. It functions in the pathway tRNA modification; tRNA-queuosine biosynthesis. Catalyzes the conversion of epoxyqueuosine (oQ) to queuosine (Q), which is a hypermodified base found in the wobble positions of tRNA(Asp), tRNA(Asn), tRNA(His) and tRNA(Tyr). This is Epoxyqueuosine reductase QueH from Dehalococcoides mccartyi (strain ATCC BAA-2266 / KCTC 15142 / 195) (Dehalococcoides ethenogenes (strain 195)).